The chain runs to 485 residues: Dipeptide and tripeptide permease C (485 aa).

Over 1-12 (MKTPSQPRAIYY) the chain is Cytoplasmic. Residues 13–33 (IVAIQIWEYFSFYGMRALLIL) form a helical membrane-spanning segment. The Periplasmic portion of the chain corresponds to 34–46 (YLTHQLGFDDNHA). A helical transmembrane segment spans residues 47–67 (ISLFSAYASLVYVTPILGGWL). Over 68-70 (ADR) the chain is Cytoplasmic. The chain crosses the membrane as a helical span at residues 71–93 (LLGNRTAVIAGALLMTLGHVVLG). Over 94–102 (IDTNSTFSL) the chain is Periplasmic. The helical transmembrane segment at 103-125 (YLALAIIICGYGLFKSNISCLLG) threads the bilayer. Over 126 to 140 (ELYDENDHRRDGGFS) the chain is Cytoplasmic. The chain crosses the membrane as a helical span at residues 141–161 (LLYAAGNIGSIAAPIACGLAA). Over 162 to 164 (QWY) the chain is Periplasmic. Residues 165–185 (GWHVGFALAGGGMFIGLLIFL) traverse the membrane as a helical segment. Residues 186–208 (SGHRHFQSTRSMDKKALTSVKFA) are Cytoplasmic-facing. A helical membrane pass occupies residues 209-229 (LPVWSWLVVMLCLAPVFFTLL). The Periplasmic segment spans residues 230 to 234 (LENDW). Residues 235–255 (SGYLLAIVCLIAAQIIARMMI) form a helical membrane-spanning segment. The Cytoplasmic portion of the chain corresponds to 256–262 (KFPEHRR). The chain crosses the membrane as a helical span at residues 263-283 (ALWQIVLLMFVGTLFWVLAQQ). The Periplasmic portion of the chain corresponds to 284-307 (GGSTISLFIDRFVNRQAFNIEVPT). Residues 308–328 (ALFQSVNAIAVMLAGVVLAWL) form a helical membrane-spanning segment. Topologically, residues 329–340 (ASPESRGNSTLR) are cytoplasmic. The chain crosses the membrane as a helical span at residues 341–361 (VWLKFAFGLLLMACGFMLLAF). Over 362–375 (DARHAAADGQASMG) the chain is Periplasmic. The helical transmembrane segment at 376–396 (VMISGLALMGFAELFIDPVAI) threads the bilayer. Residues 397–406 (AQITRLKMSG) are Cytoplasmic-facing. Residues 407-427 (VLTGIYMLATGAVANWLAGVV) form a helical membrane-spanning segment. The Periplasmic segment spans residues 428–446 (AQQTTESQISGMAIAAYQR). Residues 447–467 (FFSQMGEWTLACVAIIVVLAF) traverse the membrane as a helical segment. Residues 468–485 (ATRFLFSTPTNMIQESND) lie on the Cytoplasmic side of the membrane.

The protein belongs to the major facilitator superfamily. Proton-dependent oligopeptide transporter (POT/PTR) (TC 2.A.17) family. In terms of assembly, monomer.

It localises to the cell inner membrane. Its function is as follows. Proton-dependent permease that transports di- and tripeptides. Shows significantly higher specificity towards dipeptides than tripeptides. Has a preference for dipeptides with a C-terminal Lys residue. Can bind Ala-Lys, Lys-Ala, Ala-Ala. Can also transport alanine and trialanine. This Escherichia coli (strain K12) protein is Dipeptide and tripeptide permease C.